A 78-amino-acid polypeptide reads, in one-letter code: Large ribosomal subunit protein bL28 (78 aa).

Residues 1–20 are disordered; it reads MSRVCQVTGKRPVTGNNRSH.

The protein belongs to the bacterial ribosomal protein bL28 family.

This chain is Large ribosomal subunit protein bL28, found in Vibrio parahaemolyticus serotype O3:K6 (strain RIMD 2210633).